The chain runs to 91 residues: YcgL domain-containing protein Sde_1339 (91 aa).

A YcgL domain is found at 1–85; it reads MIVDIYRSAK…PPESYMNEIP (85 aa). Residues 72–91 form a disordered region; that stretch reads QMPPPPESYMNEIPNDKMPR.

This is YcgL domain-containing protein Sde_1339 from Saccharophagus degradans (strain 2-40 / ATCC 43961 / DSM 17024).